A 257-amino-acid polypeptide reads, in one-letter code: Tryptophan synthase alpha chain (257 aa).

Residues Glu44 and Asp55 each act as proton acceptor in the active site.

Belongs to the TrpA family. As to quaternary structure, tetramer of two alpha and two beta chains.

The catalysed reaction is (1S,2R)-1-C-(indol-3-yl)glycerol 3-phosphate + L-serine = D-glyceraldehyde 3-phosphate + L-tryptophan + H2O. Its pathway is amino-acid biosynthesis; L-tryptophan biosynthesis; L-tryptophan from chorismate: step 5/5. In terms of biological role, the alpha subunit is responsible for the aldol cleavage of indoleglycerol phosphate to indole and glyceraldehyde 3-phosphate. This chain is Tryptophan synthase alpha chain, found in Chlamydia felis (strain Fe/C-56) (Chlamydophila felis).